The sequence spans 462 residues: Chitinase 1 (462 aa).

An N-terminal signal peptide occupies residues 1–17; sequence MILNLIILLAISIVASA. Residues 18–291 enclose the GH18 domain; sequence SNIAAYWGQN…NQLYQALSGS (274 aa). A glycan (N-linked (GlcNAc...) asparagine) is linked at Asn-57. Glu-147 serves as the catalytic Proton donor.

It belongs to the glycosyl hydrolase 18 family. Chitinase class III subfamily.

The protein localises to the secreted. The catalysed reaction is Random endo-hydrolysis of N-acetyl-beta-D-glucosaminide (1-&gt;4)-beta-linkages in chitin and chitodextrins.. This Candida albicans (Yeast) protein is Chitinase 1 (CHT1).